The sequence spans 208 residues: Thymidylate kinase (208 aa).

An ATP-binding site is contributed by 10-17 (GGEGVGKS).

This sequence belongs to the thymidylate kinase family.

It carries out the reaction dTMP + ATP = dTDP + ADP. In terms of biological role, phosphorylation of dTMP to form dTDP in both de novo and salvage pathways of dTTP synthesis. The protein is Thymidylate kinase of Rhizorhabdus wittichii (strain DSM 6014 / CCUG 31198 / JCM 15750 / NBRC 105917 / EY 4224 / RW1) (Sphingomonas wittichii).